Consider the following 213-residue polypeptide: tRNA (guanine-N(7)-)-methyltransferase (213 aa).

Glu-38, Glu-63, Asp-91, and Asp-113 together coordinate S-adenosyl-L-methionine. The active site involves Asp-113. Residues Lys-117, Asp-149, and 192–195 contribute to the substrate site; that span reads TEYE.

Belongs to the class I-like SAM-binding methyltransferase superfamily. TrmB family.

It carries out the reaction guanosine(46) in tRNA + S-adenosyl-L-methionine = N(7)-methylguanosine(46) in tRNA + S-adenosyl-L-homocysteine. It participates in tRNA modification; N(7)-methylguanine-tRNA biosynthesis. Its function is as follows. Catalyzes the formation of N(7)-methylguanine at position 46 (m7G46) in tRNA. This is tRNA (guanine-N(7)-)-methyltransferase from Mycoplasmoides gallisepticum (strain R(low / passage 15 / clone 2)) (Mycoplasma gallisepticum).